A 271-amino-acid polypeptide reads, in one-letter code: Plasmanylethanolamine desaturase 1 (271 aa).

The next 3 membrane-spanning stretches (helical) occupy residues 48–68 (WCCV…LLLL), 75–95 (PLVM…SGLV), and 162–182 (VLEQ…FGTF). Positions 187–191 (HKWSH) match the Histidine box-1 motif. Residues 214-218 (HHRIH) carry the Histidine box-2 motif.

This sequence belongs to the fatty acid desaturase CarF family.

It is found in the endoplasmic reticulum membrane. The catalysed reaction is a 1-(1,2-saturated alkyl)-2-acyl-sn-glycero-3-phosphoethanolamine + 2 Fe(II)-[cytochrome b5] + O2 + 2 H(+) = a 1-O-(1Z-alkenyl)-2-acyl-sn-glycero-3-phosphoethanolamine + 2 Fe(III)-[cytochrome b5] + 2 H2O. It catalyses the reaction a 1-O-hexadecyl-2-acyl-sn-glycero-3-phosphoethanolamine + 2 Fe(II)-[cytochrome b5] + O2 + 2 H(+) = a 1-O-(1Z-hexadecenyl)-2-acyl-sn-glycero-3-phosphoethanolamine + 2 Fe(III)-[cytochrome b5] + 2 H2O. It carries out the reaction a 1-O-octadecyl-2-acyl-sn-glycero-3-phosphoethanolamine + 2 Fe(II)-[cytochrome b5] + O2 + 2 H(+) = a 1-O-(1Z-octadecenyl)-2-acyl-sn-glycero-3-phosphoethanolamine + 2 Fe(III)-[cytochrome b5] + 2 H2O. The enzyme catalyses a 1-O-(9Z-octadecenyl)-2-acyl-sn-glycero-3-phosphoethanolamine + 2 Fe(II)-[cytochrome b5] + O2 + 2 H(+) = a 1-O-(1Z,9Z-octadecadienyl)-2-acyl-sn-glycero-3-phosphoethanolamine + 2 Fe(III)-[cytochrome b5] + 2 H2O. It participates in lipid metabolism; fatty acid metabolism. In terms of biological role, plasmanylethanolamine desaturase involved in plasmalogen biogenesis in the endoplasmic reticulum membrane. Plasmalogens are glycerophospholipids with a hydrocarbon chain linked by a vinyl ether bond at the glycerol sn-1 position, and are involved in antioxidative and signaling mechanisms. This is Plasmanylethanolamine desaturase 1 from Bos taurus (Bovine).